The following is a 552-amino-acid chain: Dihydroxy-acid dehydratase (552 aa).

Asp78 is a binding site for Mg(2+). A [2Fe-2S] cluster-binding site is contributed by Cys119. 2 residues coordinate Mg(2+): Asp120 and Lys121. N6-carboxylysine is present on Lys121. Cys191 is a [2Fe-2S] cluster binding site. Glu442 serves as a coordination point for Mg(2+). The active-site Proton acceptor is Ser468.

Belongs to the IlvD/Edd family. As to quaternary structure, homodimer. The cofactor is [2Fe-2S] cluster. Mg(2+) serves as cofactor.

It catalyses the reaction (2R)-2,3-dihydroxy-3-methylbutanoate = 3-methyl-2-oxobutanoate + H2O. The enzyme catalyses (2R,3R)-2,3-dihydroxy-3-methylpentanoate = (S)-3-methyl-2-oxopentanoate + H2O. Its pathway is amino-acid biosynthesis; L-isoleucine biosynthesis; L-isoleucine from 2-oxobutanoate: step 3/4. It participates in amino-acid biosynthesis; L-valine biosynthesis; L-valine from pyruvate: step 3/4. Functionally, functions in the biosynthesis of branched-chain amino acids. Catalyzes the dehydration of (2R,3R)-2,3-dihydroxy-3-methylpentanoate (2,3-dihydroxy-3-methylvalerate) into 2-oxo-3-methylpentanoate (2-oxo-3-methylvalerate) and of (2R)-2,3-dihydroxy-3-methylbutanoate (2,3-dihydroxyisovalerate) into 2-oxo-3-methylbutanoate (2-oxoisovalerate), the penultimate precursor to L-isoleucine and L-valine, respectively. The chain is Dihydroxy-acid dehydratase from Ruminiclostridium cellulolyticum (strain ATCC 35319 / DSM 5812 / JCM 6584 / H10) (Clostridium cellulolyticum).